The following is a 228-amino-acid chain: Putative adhesin A1I_01215 (228 aa).

An N-terminal signal peptide occupies residues 1–22 (MKKLLLIAATSATVLSSALSFA).

The chain is Putative adhesin A1I_01215 from Rickettsia bellii (strain OSU 85-389).